Consider the following 856-residue polypeptide: DNA mismatch repair protein MutS (856 aa).

611–618 contacts ATP; it reads GPNMGGKS.

Belongs to the DNA mismatch repair MutS family.

Functionally, this protein is involved in the repair of mismatches in DNA. It is possible that it carries out the mismatch recognition step. This protein has a weak ATPase activity. In Histophilus somni (strain 129Pt) (Haemophilus somnus), this protein is DNA mismatch repair protein MutS.